The primary structure comprises 545 residues: Chaperonin GroEL (545 aa).

Residues 30–33 (TMGP), lysine 51, 87–91 (DGTTT), glycine 416, 479–481 (NAA), and aspartate 495 each bind ATP.

This sequence belongs to the chaperonin (HSP60) family. In terms of assembly, forms a cylinder of 14 subunits composed of two heptameric rings stacked back-to-back. Interacts with the co-chaperonin GroES.

It localises to the cytoplasm. The catalysed reaction is ATP + H2O + a folded polypeptide = ADP + phosphate + an unfolded polypeptide.. Together with its co-chaperonin GroES, plays an essential role in assisting protein folding. The GroEL-GroES system forms a nano-cage that allows encapsulation of the non-native substrate proteins and provides a physical environment optimized to promote and accelerate protein folding. The sequence is that of Chaperonin GroEL from Nautilia profundicola (strain ATCC BAA-1463 / DSM 18972 / AmH).